Reading from the N-terminus, the 285-residue chain is MRGKHIFIITALISILMLSACGQKNGSATVATATDSTITKDNFEKQLKDRYGKDMLYEMMAQDVITKKYKVPDEEVNKEVEKVKKQYGDQFKKVLENYGLKDEEDFKNQIKFKLAMNEAIKKSITEKDVKDHYKPEIKASHILVSDENEAKEIKSKLDAGASFEELAKQESQDLLSKDKGGDLGYFNSGTMAPEFETAAYKLNVGQISNPVKSSNGYHVIKLTDKKALKPYDEVKDSIRKNLEEERTADPVFSKKLLQEELKKANIKINDSDLKDTFTLVSPQGN.

A signal peptide spans 1–20 (MRGKHIFIITALISILMLSA). Cys21 carries N-palmitoyl cysteine lipidation. Residue Cys21 is the site of S-diacylglycerol cysteine attachment. The PpiC domain occupies 134-224 (KPEIKASHIL…NGYHVIKLTD (91 aa)).

The protein belongs to the PrsA family.

It localises to the cell membrane. The enzyme catalyses [protein]-peptidylproline (omega=180) = [protein]-peptidylproline (omega=0). Its function is as follows. Plays a major role in protein secretion by helping the post-translocational extracellular folding of several secreted proteins. This chain is Foldase protein PrsA 2 (prsA2), found in Bacillus cereus (strain ATCC 14579 / DSM 31 / CCUG 7414 / JCM 2152 / NBRC 15305 / NCIMB 9373 / NCTC 2599 / NRRL B-3711).